The chain runs to 160 residues: NADH-quinone oxidoreductase subunit B (160 aa).

Cysteine 37, cysteine 38, cysteine 102, and cysteine 132 together coordinate [4Fe-4S] cluster.

Belongs to the complex I 20 kDa subunit family. As to quaternary structure, NDH-1 is composed of 14 different subunits. Subunits NuoB, C, D, E, F, and G constitute the peripheral sector of the complex. Requires [4Fe-4S] cluster as cofactor.

The protein resides in the cell inner membrane. The enzyme catalyses a quinone + NADH + 5 H(+)(in) = a quinol + NAD(+) + 4 H(+)(out). Functionally, NDH-1 shuttles electrons from NADH, via FMN and iron-sulfur (Fe-S) centers, to quinones in the respiratory chain. Couples the redox reaction to proton translocation (for every two electrons transferred, four hydrogen ions are translocated across the cytoplasmic membrane), and thus conserves the redox energy in a proton gradient. The sequence is that of NADH-quinone oxidoreductase subunit B from Neisseria meningitidis serogroup A / serotype 4A (strain DSM 15465 / Z2491).